Reading from the N-terminus, the 162-residue chain is MEDNKTTIINRLEAVKRNSGKSCSQIAEQTGLTNVYVAQLLRRQAQLNPDTAPSLRAALPELPEDLLQEMMRPPMRSYDPNLIQEPCVYRLNEAVMHFGESIKEIINEEFGDGIMSAIDFYCSVDKVKGVDGKDRVVVTFDGKYLPYTEQKSEHMVSRPRPH.

Catalysis depends on residues Arg90, Glu93, and Ser116.

This sequence belongs to the cyanase family.

It catalyses the reaction cyanate + hydrogencarbonate + 3 H(+) = NH4(+) + 2 CO2. In terms of biological role, catalyzes the reaction of cyanate with bicarbonate to produce ammonia and carbon dioxide. The polypeptide is Cyanate hydratase (Populus trichocarpa (Western balsam poplar)).